The following is a 185-amino-acid chain: MSNTASLKKEYADRIAPALKSQFQYSSTMQVPVLKKIVINQGLGMAVADKKIIEVAINEMTAITGQKAVATISRKDIANFKLRKKMPIGVMVTLRRERMYEFLEKLVRVALPRIRDFKGIESKFDGKGNYTLGIQEQIIFPEINIDSITRILGMNITFVTSAETDEEGYALLKEFGLPFKNAKKD.

The protein belongs to the universal ribosomal protein uL5 family. In terms of assembly, part of the 50S ribosomal subunit; part of the 5S rRNA/L5/L18/L25 subcomplex. Contacts the 5S rRNA and the P site tRNA. Forms a bridge to the 30S subunit in the 70S ribosome.

In terms of biological role, this is one of the proteins that bind and probably mediate the attachment of the 5S RNA into the large ribosomal subunit, where it forms part of the central protuberance. In the 70S ribosome it contacts protein S13 of the 30S subunit (bridge B1b), connecting the 2 subunits; this bridge is implicated in subunit movement. Contacts the P site tRNA; the 5S rRNA and some of its associated proteins might help stabilize positioning of ribosome-bound tRNAs. This chain is Large ribosomal subunit protein uL5, found in Bacteroides thetaiotaomicron (strain ATCC 29148 / DSM 2079 / JCM 5827 / CCUG 10774 / NCTC 10582 / VPI-5482 / E50).